Reading from the N-terminus, the 529-residue chain is GMP synthase [glutamine-hydrolyzing] (529 aa).

The region spanning P13–T204 is the Glutamine amidotransferase type-1 domain. The Nucleophile role is filled by C90. Residues H178 and E180 contribute to the active site. The GMPS ATP-PPase domain maps to W205–R403. S233–A239 contributes to the ATP binding site.

As to quaternary structure, homodimer.

It carries out the reaction XMP + L-glutamine + ATP + H2O = GMP + L-glutamate + AMP + diphosphate + 2 H(+). The protein operates within purine metabolism; GMP biosynthesis; GMP from XMP (L-Gln route): step 1/1. Its function is as follows. Catalyzes the synthesis of GMP from XMP. This chain is GMP synthase [glutamine-hydrolyzing], found in Corynebacterium jeikeium (strain K411).